A 103-amino-acid chain; its full sequence is UPF0298 protein LACR_0404 (103 aa).

The protein belongs to the UPF0298 family.

The protein localises to the cytoplasm. This Lactococcus lactis subsp. cremoris (strain SK11) protein is UPF0298 protein LACR_0404.